The following is a 148-amino-acid chain: uncharacterized protein (148 aa).

The segment covering 1–11 has biased composition (polar residues); that stretch reads MKPRNINNSLP. The tract at residues 1 to 31 is disordered; the sequence is MKPRNINNSLPLQPLVPDQENKNKKNEEKSV. Residues 19–30 are compositionally biased toward basic and acidic residues; it reads QENKNKKNEEKS.

This is an uncharacterized protein from Escherichia coli (strain K12).